Consider the following 1001-residue polypeptide: ATP-dependent DNA/RNA helicase DHX36 (1001 aa).

Positions M1–G44 are required for recruitment to cytoplasmic stress granules. Positions M1 to E54 are disordered. The tract at residues M1–A97 is required for the pre-miR-134 transport. The tract at residues M1–M193 is necessary for nuclear and nucleolar caps localizations. The segment covering P15–G41 has biased composition (gly residues). Residues H46–K68 form a DSM (DHX36-specific motif) region. A required for G4-DNA- and G4-RNA-binding region spans residues H46–K98. RecA-like domain regions lie at residues T99–I379 and P380–L621. Residues E120–T147 adopt a coiled-coil conformation. S154 carries the phosphoserine modification. The Helicase ATP-binding domain occupies V210–P380. G226–T231 serves as a coordination point for ATP. Residues R258 to Q310 are necessary for interaction with single-stranded DNA at the 3'-end of the G4-DNA structure. The DEAH box motif lies at D327–H330. The Mg(2+) site is built by E328 and H330. The region spanning A470–R640 is the Helicase C-terminal domain. Residues W491–S550 form a necessary for interaction with single-stranded DNA at the 3'-end of the G4-DNA structure region. The Nuclear localization signal signature appears at D510–M521. ATP contacts are provided by residues S550 and R595–R598. Residues P622–V691 are WH domain. 3 necessary for interaction with single-stranded DNA at the 3'-end of the G4-DNA structure regions span residues E631 to P690, N842 to H853, and H863 to Y893. The OB-fold-like subdomains stretch occupies residues P834–V898. An N6-acetyllysine modification is found at K940. At S956 the chain carries Phosphoserine.

The protein belongs to the DEAD box helicase family. DEAH subfamily. Found in a multi-helicase-TICAM1 complex at least composed of DHX36, DDX1, DDX21 and TICAM1; this complex exists in resting cells with or without dsRNA poly(I:C) ligand stimulation. Interacts (via C-terminus) with TICAM1 (via TIR domain). Interacts (via C-terminus) with DDX21; this interaction serves as bridges to TICAM1. Interacts with TERT; this interaction is dependent on the ability of DHX36 to bind to the G-quadruplex RNA (G4-RNA) structure present in the telomerase RNA template component (TERC). Interacts with DKC1; this interaction is dependent on the ability of DHX36 to bind to the G4-RNA structure present in TERC. Interacts with PARN; this interaction stimulates PARN to enhance uPA mRNA decay. Interacts with EXOSC3; this interaction occurs in a RNase-insensitive manner. Interacts with EXOSC10; this interaction occurs in a RNase-insensitive manner. Interacts with ILF3; this interaction occurs in a RNA-dependent manner. Interacts with ELAVL1; this interaction occurs in an RNA-dependent manner. Interacts with DDX5; this interaction occurs in a RNA-dependent manner. Interacts with DDX17; this interaction occurs in a RNA-dependent manner. Interacts with HDAC1; this interaction occurs in a RNA-dependent manner. Interacts with HDAC3; this interaction occurs in a RNA-dependent manner. Interacts with HDAC4. Interacts with AGO1. Interacts with AGO2. Interacts with ERCC6. Mg(2+) serves as cofactor. In terms of tissue distribution, expressed in spermatogonia stem cells and primary spermatocytes (at protein level). Expressed strongly in testis. Weakly expressed in heart, lung, liver, kidney, small intestine, spleen, lymphe node and thymus.

It is found in the nucleus. The protein localises to the cytoplasm. It localises to the cytosol. The protein resides in the stress granule. Its subcellular location is the nucleus speckle. It is found in the chromosome. The protein localises to the telomere. It localises to the mitochondrion. The protein resides in the perikaryon. Its subcellular location is the cell projection. It is found in the dendrite. The protein localises to the axon. It catalyses the reaction ATP + H2O = ADP + phosphate + H(+). With respect to regulation, ATPase activity is enhanced in the presence of homomeric poly(U) RNAs, but not by double-stranded DNA (dsDNA), double-stranded RNA (dsRNA) and tRNA. Functionally, multifunctional ATP-dependent helicase that unwinds G-quadruplex (G4) structures. Plays a role in many biological processes such as genomic integrity, gene expression regulations and as a sensor to initiate antiviral responses. G4 structures correspond to helical structures containing guanine tetrads. Binds with high affinity to and unwinds G4 structures that are formed in nucleic acids (G4-DNA and G4-RNA). Plays a role in genomic integrity. Converts the G4-RNA structure present in telomerase RNA template component (TREC) into a double-stranded RNA to promote P1 helix formation that acts as a template boundary ensuring accurate reverse transcription. Plays a role in transcriptional regulation. Resolves G4-DNA structures in promoters of genes, such as YY1, KIT/c-kit and ALPL and positively regulates their expression. Plays a role in post-transcriptional regulation. Unwinds a G4-RNA structure located in the 3'-UTR polyadenylation site of the pre-mRNA TP53 and stimulates TP53 pre-mRNA 3'-end processing in response to ultraviolet (UV)-induced DNA damage. Binds to the precursor-microRNA-134 (pre-miR-134) terminal loop and regulates its transport into the synapto-dendritic compartment. Involved in the pre-miR-134-dependent inhibition of target gene expression and the control of dendritic spine size. Plays a role in the regulation of cytoplasmic mRNA translation and mRNA stability. Binds to both G4-RNA structures and alternative non-quadruplex-forming sequence within the 3'-UTR of the PITX1 mRNA regulating negatively PITX1 protein expression. Binds to both G4-RNA structure in the 5'-UTR and AU-rich elements (AREs) localized in the 3'-UTR of NKX2-5 mRNA to either stimulate protein translation or induce mRNA decay in an ELAVL1-dependent manner, respectively. Also binds to ARE sequences present in several mRNAs mediating exosome-mediated 3'-5' mRNA degradation. Involved in cytoplasmic urokinase-type plasminogen activator (uPA) mRNA decay. Component of a multi-helicase-TICAM1 complex that acts as a cytoplasmic sensor of viral double-stranded RNA (dsRNA) and plays a role in the activation of a cascade of antiviral responses including the induction of pro-inflammatory cytokines via the adapter molecule TICAM1. Required for the early embryonic development and hematopoiesis. Involved in the regulation of cardioblast differentiation and proliferation during heart development. Involved in spermatogonia differentiation. May play a role in ossification. This is ATP-dependent DNA/RNA helicase DHX36 from Mus musculus (Mouse).